An 83-amino-acid chain; its full sequence is High-potential iron-sulfur protein (83 aa).

[4Fe-4S] cluster is bound by residues cysteine 43, cysteine 46, cysteine 61, and cysteine 75.

It belongs to the high-potential iron-sulfur protein (HiPIP) family. In terms of assembly, homodimer.

In terms of biological role, specific class of high-redox-potential 4Fe-4S ferredoxins. Functions in anaerobic electron transport in most purple and in some other photosynthetic bacteria and in at least one genus (Paracoccus) of halophilic, denitrifying bacteria. The chain is High-potential iron-sulfur protein (hip) from Thermochromatium tepidum (Chromatium tepidum).